The chain runs to 212 residues: Uridine kinase (212 aa).

13–20 provides a ligand contact to ATP; it reads GASASGKS.

Belongs to the uridine kinase family.

It localises to the cytoplasm. It catalyses the reaction uridine + ATP = UMP + ADP + H(+). The catalysed reaction is cytidine + ATP = CMP + ADP + H(+). It participates in pyrimidine metabolism; CTP biosynthesis via salvage pathway; CTP from cytidine: step 1/3. Its pathway is pyrimidine metabolism; UMP biosynthesis via salvage pathway; UMP from uridine: step 1/1. The sequence is that of Uridine kinase from Shewanella denitrificans (strain OS217 / ATCC BAA-1090 / DSM 15013).